Reading from the N-terminus, the 494-residue chain is Alpha-amylase-related protein (494 aa).

The N-terminal stretch at 1 to 20 (MFKFATAVILCLVAASSTLA) is a signal peptide. Glutamine 21 carries the pyrrolidone carboxylic acid modification. Cysteine 48 and cysteine 104 form a disulfide bridge. Ca(2+)-binding residues include asparagine 118, glutamine 169, and aspartate 178. A disulfide bond links cysteine 157 and cysteine 171. Residue arginine 206 coordinates chloride. Aspartate 208 (nucleophile) is an active-site residue. Histidine 212 serves as a coordination point for Ca(2+). Glutamate 245 (proton donor) is an active-site residue. Chloride is bound by residues asparagine 308 and arginine 343. Cystine bridges form between cysteine 376–cysteine 382, cysteine 418–cysteine 441, and cysteine 448–cysteine 460.

Belongs to the glycosyl hydrolase 13 family. As to quaternary structure, monomer. Ca(2+) is required as a cofactor. Requires chloride as cofactor.

The protein localises to the secreted. The enzyme catalyses Endohydrolysis of (1-&gt;4)-alpha-D-glucosidic linkages in polysaccharides containing three or more (1-&gt;4)-alpha-linked D-glucose units.. In Drosophila bipectinata (Fruit fly), this protein is Alpha-amylase-related protein (Amyrel).